Consider the following 316-residue polypeptide: UDP-N-acetylenolpyruvoylglucosamine reductase (316 aa).

The FAD-binding PCMH-type domain occupies 30-194 (VGGEADYLVF…LSVKFALAPG (165 aa)). R173 is a catalytic residue. The Proton donor role is filled by S223. The active site involves E293.

The protein belongs to the MurB family. It depends on FAD as a cofactor.

The protein localises to the cytoplasm. The catalysed reaction is UDP-N-acetyl-alpha-D-muramate + NADP(+) = UDP-N-acetyl-3-O-(1-carboxyvinyl)-alpha-D-glucosamine + NADPH + H(+). The protein operates within cell wall biogenesis; peptidoglycan biosynthesis. Its function is as follows. Cell wall formation. This is UDP-N-acetylenolpyruvoylglucosamine reductase from Streptococcus pneumoniae serotype 2 (strain D39 / NCTC 7466).